A 122-amino-acid polypeptide reads, in one-letter code: Small ribosomal subunit protein uS13 (122 aa).

Positions 93-122 are disordered; the sequence is RRGLPVRGQRTKTNARTRKGPKKTIAGKKK.

This sequence belongs to the universal ribosomal protein uS13 family. In terms of assembly, part of the 30S ribosomal subunit. Forms a loose heterodimer with protein S19. Forms two bridges to the 50S subunit in the 70S ribosome.

Functionally, located at the top of the head of the 30S subunit, it contacts several helices of the 16S rRNA. In the 70S ribosome it contacts the 23S rRNA (bridge B1a) and protein L5 of the 50S subunit (bridge B1b), connecting the 2 subunits; these bridges are implicated in subunit movement. Contacts the tRNAs in the A and P-sites. The protein is Small ribosomal subunit protein uS13 of Corynebacterium jeikeium (strain K411).